A 228-amino-acid polypeptide reads, in one-letter code: ATP-dependent dethiobiotin synthetase BioD (228 aa).

Glutamate 12 to threonine 17 serves as a coordination point for ATP. Threonine 16 is a Mg(2+) binding site. The active site involves lysine 37. Serine 41 provides a ligand contact to substrate. ATP-binding positions include aspartate 54, glutamate 116–glycine 119, and proline 205–leucine 207. Mg(2+) is bound by residues aspartate 54 and glutamate 116.

Belongs to the dethiobiotin synthetase family. In terms of assembly, homodimer. It depends on Mg(2+) as a cofactor.

The protein resides in the cytoplasm. The enzyme catalyses (7R,8S)-7,8-diammoniononanoate + CO2 + ATP = (4R,5S)-dethiobiotin + ADP + phosphate + 3 H(+). It participates in cofactor biosynthesis; biotin biosynthesis; biotin from 7,8-diaminononanoate: step 1/2. Its function is as follows. Catalyzes a mechanistically unusual reaction, the ATP-dependent insertion of CO2 between the N7 and N8 nitrogen atoms of 7,8-diaminopelargonic acid (DAPA, also called 7,8-diammoniononanoate) to form a ureido ring. This chain is ATP-dependent dethiobiotin synthetase BioD, found in Pseudomonas aeruginosa (strain UCBPP-PA14).